A 294-amino-acid polypeptide reads, in one-letter code: Complement C1q tumor necrosis factor-related protein 2 (294 aa).

Positions 1 to 24 are cleaved as a signal peptide; that stretch reads MTIFKKVTTMISWVLLACALPCAA. Positions 42-156 are disordered; sequence QLVCSLPGPQ…PGPCSCGSSR (115 aa). One can recognise a Collagen-like domain in the interval 48-150; that stretch reads PGPQGPPGPP…KGEPGLPGPC (103 aa). Positions 50–59 are enriched in pro residues; the sequence is PQGPPGPPGA. A compositionally biased stretch (basic and acidic residues) spans 75–87; the sequence is DGQDGQDGDRGDS. The span at 105–129 shows a compositional bias: low complexity; the sequence is KGKAGAIGRAGPRGPKGVSGTPGKH. Residues 154 to 290 form the C1q domain; it reads SSRAKSAFSV…GFLIYADQGD (137 aa).

As to quaternary structure, may interact with ERFE.

It localises to the secreted. In terms of biological role, involved in the regulation of lipid metabolism in adipose tissue and liver. The chain is Complement C1q tumor necrosis factor-related protein 2 (C1qtnf2) from Mus musculus (Mouse).